Reading from the N-terminus, the 642-residue chain is Chaperone protein DnaK (642 aa).

Thr199 is subject to Phosphothreonine; by autocatalysis. The span at Glu570–Asp585 shows a compositional bias: basic and acidic residues. The segment at Glu570–Lys642 is disordered. Residues Glu600–Gln620 are compositionally biased toward low complexity. Residues Asp627–Lys642 show a composition bias toward acidic residues.

It belongs to the heat shock protein 70 family.

Functionally, acts as a chaperone. The polypeptide is Chaperone protein DnaK (Idiomarina loihiensis (strain ATCC BAA-735 / DSM 15497 / L2-TR)).